Here is a 469-residue protein sequence, read N- to C-terminus: Sorting and assembly machinery component 50 homolog (469 aa).

The interval 1–20 (MGTVHARSLEPLPSSGPDFG) is disordered. The POTRA domain maps to 45–125 (VVVQHVHFDG…LDVTFEVTEL (81 aa)). Lysine 255 bears the N6-methyllysine mark.

The protein belongs to the SAM50/omp85 family. In terms of assembly, associates with the mitochondrial contact site and cristae organizing system (MICOS) complex, composed of at least MICOS10/MIC10, CHCHD3/MIC19, CHCHD6/MIC25, APOOL/MIC27, IMMT/MIC60, APOO/MIC23/MIC26 and QIL1/MIC13. This complex was also known under the names MINOS or MitOS complex. The MICOS complex associates with mitochondrial outer membrane proteins SAMM50, MTX1 and MTX2 (together described as components of the mitochondrial outer membrane sorting assembly machinery (SAM) complex) and DNAJC11, mitochondrial inner membrane protein TMEM11 and with HSPA9. The MICOS and SAM complexes together with DNAJC11 are part of a large protein complex spanning both membranes termed the mitochondrial intermembrane space bridging (MIB) complex. Interacts with CHCHD3/MIC19. Interacts with ARMC1. As to quaternary structure, (Microbial infection) Interacts with parasite T.gondii RH strain MAF1b1; the interaction is probably indirect and results in the disruption of the MIB complex and the formation of SPOTs (structures positive for outer mitochondrial membrane (OMM)), a cellular response to OMM stress, which leads to the constitutive shedding of OMM vesicles.

It localises to the mitochondrion outer membrane. The protein localises to the cytoplasm. Its subcellular location is the mitochondrion. In terms of biological role, plays a crucial role in the maintenance of the structure of mitochondrial cristae and the proper assembly of the mitochondrial respiratory chain complexes. Required for the assembly of TOMM40 into the TOM complex. The protein is Sorting and assembly machinery component 50 homolog (SAMM50) of Homo sapiens (Human).